Here is a 397-residue protein sequence, read N- to C-terminus: MAIRIKLKPGRERSLERRHPWIFSNGIHNVNGGKPQAGDTVEVVAHDGHWLGRGAWSPESQIQVRIWTFDKEETIDADFFARRIKRAQAGRDDLIREQGLTGYRLIAAESDGLPGITIDRYANVLVCQLLSTGAEKWRDTIVEQLVLQYPDCAVYERSDVDSRKKEGLVPVVGLLHGELPAMPVIIEENGIKIAVDVVKGHKTGFYLDQRDNRAMAARFVKGKSVLNCFCYTGTFGLYAAKAGAASIENVDVSTLALQTARDNMAINNLNDDHVNYNEADVFKLLRQYRDEGKTFDVIVLDPPKFADNKSQLDGACRGYKDINMIAMQLLNPGGILLTFSCSGLMQSDLFQKVVADAALDAKREVQFIERMHQASDHPISSAFPEGYYLKGLVARVW.

Positions 2-80 constitute a PUA domain; that stretch reads AIRIKLKPGR…KEETIDADFF (79 aa).

It belongs to the methyltransferase superfamily. RlmI family.

It localises to the cytoplasm. The enzyme catalyses cytidine(1962) in 23S rRNA + S-adenosyl-L-methionine = 5-methylcytidine(1962) in 23S rRNA + S-adenosyl-L-homocysteine + H(+). Its function is as follows. Specifically methylates the cytosine at position 1962 (m5C1962) of 23S rRNA. This is Ribosomal RNA large subunit methyltransferase I from Shewanella frigidimarina (strain NCIMB 400).